The primary structure comprises 245 residues: tRNA (guanine-N(7)-)-methyltransferase (245 aa).

Residues Gly70, 93–94 (EI), 126–127 (NA), and Leu146 contribute to the S-adenosyl-L-methionine site. The active site involves Asp149. 224-226 (SEE) lines the S-adenosyl-L-methionine pocket.

Belongs to the class I-like SAM-binding methyltransferase superfamily. TrmB family.

It is found in the nucleus. The enzyme catalyses guanosine(46) in tRNA + S-adenosyl-L-methionine = N(7)-methylguanosine(46) in tRNA + S-adenosyl-L-homocysteine. It participates in tRNA modification; N(7)-methylguanine-tRNA biosynthesis. Catalyzes the formation of N(7)-methylguanine at position 46 (m7G46) in tRNA. The chain is tRNA (guanine-N(7)-)-methyltransferase from Aedes aegypti (Yellowfever mosquito).